The following is a 282-amino-acid chain: Putative glycosyltransferase HI_0765 (282 aa).

This sequence belongs to the glycosyltransferase 25 family.

The polypeptide is Putative glycosyltransferase HI_0765 (Haemophilus influenzae (strain ATCC 51907 / DSM 11121 / KW20 / Rd)).